Reading from the N-terminus, the 404-residue chain is Cysteine desulfurase IscS (404 aa).

Residues 75 to 76 (AT), N155, Q183, and 203 to 205 (SAH) each bind pyridoxal 5'-phosphate. The residue at position 206 (K206) is an N6-(pyridoxal phosphate)lysine. A pyridoxal 5'-phosphate-binding site is contributed by T243. C328 functions as the Cysteine persulfide intermediate in the catalytic mechanism. C328 contacts [2Fe-2S] cluster.

The protein belongs to the class-V pyridoxal-phosphate-dependent aminotransferase family. NifS/IscS subfamily. As to quaternary structure, homodimer. Forms a heterotetramer with IscU, interacts with other sulfur acceptors. Pyridoxal 5'-phosphate serves as cofactor.

The protein resides in the cytoplasm. The catalysed reaction is (sulfur carrier)-H + L-cysteine = (sulfur carrier)-SH + L-alanine. Its pathway is cofactor biosynthesis; iron-sulfur cluster biosynthesis. Master enzyme that delivers sulfur to a number of partners involved in Fe-S cluster assembly, tRNA modification or cofactor biosynthesis. Catalyzes the removal of elemental sulfur atoms from cysteine to produce alanine. Functions as a sulfur delivery protein for Fe-S cluster synthesis onto IscU, an Fe-S scaffold assembly protein, as well as other S acceptor proteins. This chain is Cysteine desulfurase IscS, found in Pseudomonas fluorescens (strain ATCC BAA-477 / NRRL B-23932 / Pf-5).